The following is a 428-amino-acid chain: Peptidase B (428 aa).

Residues Lys195 and Asp200 each coordinate Mn(2+). Lys207 is a catalytic residue. The Mn(2+) site is built by Asp218, Asp277, and Glu279. Arg281 is an active-site residue.

It belongs to the peptidase M17 family. As to quaternary structure, homohexamer. It depends on Mn(2+) as a cofactor.

It is found in the cytoplasm. The catalysed reaction is Release of an N-terminal amino acid, Xaa, from a peptide or arylamide. Xaa is preferably Glu or Asp but may be other amino acids, including Leu, Met, His, Cys and Gln.. In terms of biological role, probably plays an important role in intracellular peptide degradation. The chain is Peptidase B from Cronobacter sakazakii (strain ATCC BAA-894) (Enterobacter sakazakii).